A 100-amino-acid chain; its full sequence is Large ribosomal subunit protein uL23 (100 aa).

It belongs to the universal ribosomal protein uL23 family. As to quaternary structure, part of the 50S ribosomal subunit. Contacts protein L29, and trigger factor when it is bound to the ribosome.

Functionally, one of the early assembly proteins it binds 23S rRNA. One of the proteins that surrounds the polypeptide exit tunnel on the outside of the ribosome. Forms the main docking site for trigger factor binding to the ribosome. This is Large ribosomal subunit protein uL23 from Escherichia coli O157:H7.